A 357-amino-acid chain; its full sequence is Beta-hexosaminidase (357 aa).

Residues Asp66, Arg74, Arg140, and 170–171 contribute to the substrate site; that span reads KH. His183 (proton donor/acceptor) is an active-site residue. The Nucleophile role is filled by Asp254.

The protein belongs to the glycosyl hydrolase 3 family. NagZ subfamily.

It localises to the cytoplasm. It catalyses the reaction Hydrolysis of terminal non-reducing N-acetyl-D-hexosamine residues in N-acetyl-beta-D-hexosaminides.. It participates in cell wall biogenesis; peptidoglycan recycling. Its function is as follows. Plays a role in peptidoglycan recycling by cleaving the terminal beta-1,4-linked N-acetylglucosamine (GlcNAc) from peptide-linked peptidoglycan fragments, giving rise to free GlcNAc, anhydro-N-acetylmuramic acid and anhydro-N-acetylmuramic acid-linked peptides. This Chromobacterium violaceum (strain ATCC 12472 / DSM 30191 / JCM 1249 / CCUG 213 / NBRC 12614 / NCIMB 9131 / NCTC 9757 / MK) protein is Beta-hexosaminidase.